We begin with the raw amino-acid sequence, 305 residues long: MLKQRTIKSLVKTVGIGLHSGRKVTLTLRPAPADTGIVFTRVDLPEAVEIHAAASAIGDTRLASVLQKDGARVSTVEHLMSACAGLGVDNLYVDVDAEEIPIMDGSAASFVFLLQSAGMEEQPAAKRFIRVKKAVEVRDGDKLARLEPFFGFKLAFTIDFRHPAVDKTGQTFTIDFADTSYVREIARARTFGFAHEVEALREMGLARGGSLDNAIVLDEHRMLNNEELRYGDEFVRHKILDAIGDLYVIGHPLIASYVAHKSGHGMNNQLLRALLADQEAYEFVTFDKVEEAPVAFLPQAQPAFA.

Positions 78, 237, and 241 each coordinate Zn(2+). The Proton donor role is filled by His264.

Belongs to the LpxC family. The cofactor is Zn(2+).

It catalyses the reaction a UDP-3-O-[(3R)-3-hydroxyacyl]-N-acetyl-alpha-D-glucosamine + H2O = a UDP-3-O-[(3R)-3-hydroxyacyl]-alpha-D-glucosamine + acetate. It participates in glycolipid biosynthesis; lipid IV(A) biosynthesis; lipid IV(A) from (3R)-3-hydroxytetradecanoyl-[acyl-carrier-protein] and UDP-N-acetyl-alpha-D-glucosamine: step 2/6. Its function is as follows. Catalyzes the hydrolysis of UDP-3-O-myristoyl-N-acetylglucosamine to form UDP-3-O-myristoylglucosamine and acetate, the committed step in lipid A biosynthesis. The protein is UDP-3-O-acyl-N-acetylglucosamine deacetylase of Cupriavidus metallidurans (strain ATCC 43123 / DSM 2839 / NBRC 102507 / CH34) (Ralstonia metallidurans).